Reading from the N-terminus, the 420-residue chain is Putative FBD-associated F-box protein At1g78730 (420 aa).

Residues 21-71 (LDWLRKLPDSLLCQVFLNLPTKDVVKTSVLSSTWGNIWRSVPGLDLGYGDF) form the F-box domain. The FBD domain maps to 341–390 (ISILPGPQCNLPALEFVDILKPMVEKETELKLMSYFLEKSTILKKLTLRL).

In Arabidopsis thaliana (Mouse-ear cress), this protein is Putative FBD-associated F-box protein At1g78730.